The sequence spans 548 residues: Rhodopsin kinase GRK7 (548 aa).

Ser34 bears the Phosphoserine; by PKA mark. Residues 54–171 (FHSLCEQQPI…LASPFYDRFL (118 aa)) form the RGS domain. Positions 186–449 (FTEFRVLGKG…ADDPRKHPFF (264 aa)) constitute a Protein kinase domain. ATP contacts are provided by residues 192-200 (LGKGGFGEV) and Lys215. The Proton acceptor role is filled by Asp311. The region spanning 450–515 (QTVNFPRLEA…GAVPVAWQEE (66 aa)) is the AGC-kinase C-terminal domain. The interval 523–548 (EELNDPNRPSGDGKGDSSKSGVCLLL) is disordered. Position 545 is a cysteine methyl ester (Cys545). Residue Cys545 is the site of S-geranylgeranyl cysteine attachment. Residues 546–548 (LLL) constitute a propeptide, removed in mature form.

It belongs to the protein kinase superfamily. AGC Ser/Thr protein kinase family. GPRK subfamily. In terms of assembly, interacts (when prenylated) with PDE6D; this promotes release from membranes. Autophosphorylated. Phosphorylation at Ser-34 is regulated by light and activated by cAMP. As to expression, retina. Cones and rod.

Its subcellular location is the membrane. It catalyses the reaction L-threonyl-[rhodopsin] + ATP = O-phospho-L-threonyl-[rhodopsin] + ADP + H(+). The catalysed reaction is L-seryl-[rhodopsin] + ATP = O-phospho-L-seryl-[rhodopsin] + ADP + H(+). Inhibited by phosphorylation of Ser-34. In terms of biological role, retina-specific kinase involved in the shutoff of the photoresponse and adaptation to changing light conditions via cone opsin phosphorylation, including rhodopsin (RHO). The chain is Rhodopsin kinase GRK7 (GRK7) from Ictidomys tridecemlineatus (Thirteen-lined ground squirrel).